A 575-amino-acid polypeptide reads, in one-letter code: Epsin-1 (575 aa).

The a 1,2-diacyl-sn-glycero-3-phospho-(1D-myo-inositol-4,5-bisphosphate) site is built by K11, R25, N30, R63, and H73. The region spanning 12-144 (NIVHNYSEAE…RDEDRLREER (133 aa)) is the ENTH domain. The segment at 150–186 (TKEKLAQTATASSAAVGSGPPPEAEQAWPQSSGEEEL) is disordered. The span at 157-167 (TATASSAAVGS) shows a compositional bias: low complexity. 3 UIM domains span residues 183–202 (EEEL…ADQP), 208–227 (EDDV…HDKE), and 233–252 (GDDL…TGGK). A disordered region spans residues 264–575 (FTTPAPPQAS…PAPNTNPFLL (312 aa)). A run of 8 repeats spans residues 274 to 276 (DPW), 294 to 296 (DPW), 306 to 308 (DPW), 319 to 321 (DPW), 332 to 334 (DPW), 349 to 351 (DPW), 367 to 369 (DPW), and 377 to 379 (DPW). The 8 X 3 AA repeats of D-P-W stretch occupies residues 274–379 (DPWGGPASVP…APAPAFSDPW (106 aa)). Composition is skewed to low complexity over residues 279-299 (PASV…WGGP) and 306-316 (DPWGGAAPTPA). Positions 332 to 346 (DPWGGTPAPAAGEGP) are enriched in low complexity. Low complexity predominate over residues 367–379 (DPWAPAPAFSDPW). S382 is subject to Phosphoserine. The [DE]-X(1,2)-F-X-X-[FL]-X-X-X-R motif motif lies at 401–410 (DEFSDFDRLR). S418 and S419 each carry phosphoserine. Phosphothreonine is present on T420. Residues S434, S446, and S453 each carry the phosphoserine modification. Pro residues predominate over residues 453 to 467 (SPPPAATPTPTPPTR). A phosphothreonine mark is found at T459, T463, and T469. S472 bears the Phosphoserine mark. T493 carries the post-translational modification Phosphothreonine. 2 tandem repeats follow at residues 501-503 (NPF) and 517-519 (NPF). The interval 501–573 (NPFLPSGAPP…GPPAPNTNPF (73 aa)) is 3 X 3 AA repeats of N-P-F. R533 carries the omega-N-methylarginine modification. Positions 556–569 (GLPPMMPPGPPAPN) are enriched in pro residues. Residues 571–573 (NPF) form repeat 3.

The protein belongs to the epsin family. Monomer. Binds clathrin and ZBTB16/ZNF145. Binds ubiquitinated proteins. Interacts with RALBP1 in a complex also containing NUMB and TFAP2A during interphase and mitosis. Interacts with AP2B1. Interacts with UBQLN2. Interacts with ITSN1. Interacts with AP2A1 and AP2A2. Interacts with REPS2; the interaction is direct. Interacts with EPS15; the interaction is direct. Interacts with ENTREP1. Phosphorylated on serine and/or threonine residues in mitotic cells. Phosphorylation reduces interaction with REPS2, AP-2 and the membrane fraction. Depolarization of synaptosomes results in dephosphorylation. Post-translationally, ubiquitinated.

It is found in the cytoplasm. It localises to the cell membrane. The protein resides in the nucleus. Its subcellular location is the membrane. The protein localises to the clathrin-coated pit. Binds to membranes enriched in phosphatidylinositol 4,5-bisphosphate (PtdIns(4,5)P2). Modifies membrane curvature and facilitates the formation of clathrin-coated invaginations. Regulates receptor-mediated endocytosis. This Mus musculus (Mouse) protein is Epsin-1 (Epn1).